We begin with the raw amino-acid sequence, 79 residues long: Acyl carrier protein (79 aa).

Residues 2 to 77 (SDIEARVKKI…LAIDYAKSHA (76 aa)) form the Carrier domain. Residue Ser-37 is modified to O-(pantetheine 4'-phosphoryl)serine.

This sequence belongs to the acyl carrier protein (ACP) family. 4'-phosphopantetheine is transferred from CoA to a specific serine of apo-ACP by AcpS. This modification is essential for activity because fatty acids are bound in thioester linkage to the sulfhydryl of the prosthetic group.

It is found in the cytoplasm. It participates in lipid metabolism; fatty acid biosynthesis. Its function is as follows. Carrier of the growing fatty acid chain in fatty acid biosynthesis. In Methylibium petroleiphilum (strain ATCC BAA-1232 / LMG 22953 / PM1), this protein is Acyl carrier protein.